A 373-amino-acid chain; its full sequence is Histidine protein methyltransferase 1 homolog (373 aa).

Residues 30 to 42 (SKESLVSERQKGT) are compositionally biased toward basic and acidic residues. Disordered regions lie at residues 30-52 (SKESLVSERQKGTHRDKKCSTEQ) and 64-94 (KSERNEAPSQDPDSSFGAANSSSNLEPHEEK). The span at 70–88 (APSQDPDSSFGAANSSSNL) shows a compositional bias: polar residues. Residues serine 72 and serine 77 each carry the phosphoserine modification. Histidine 154 bears the Tele-methylhistidine mark. S-adenosyl-L-methionine is bound by residues 168–172 (IWECT), glycine 195, and 216–218 (QDY). The short motif at 247–253 (PDVKRLR) is the Nuclear localization signal element. S-adenosyl-L-methionine is bound by residues 269–271 (GEW) and serine 294.

The protein belongs to the methyltransferase superfamily. METTL18 family. As to quaternary structure, interacts with GRWD1 and members of the heat shock protein 90 and 70 families; these proteins may possibly be methylation substrates for the enzyme. Post-translationally, monomethylated at His-154 through automethylation. Automethylation at His-154 positively regulates the methyltransferase activity toward RPL3. Probably methylated on other residues.

The protein resides in the cytoplasm. Its subcellular location is the cytosol. The protein localises to the nucleus. It localises to the nucleolus. It carries out the reaction L-histidyl-[protein] + S-adenosyl-L-methionine = N(tele)-methyl-L-histidyl-[protein] + S-adenosyl-L-homocysteine + H(+). Functionally, protein-L-histidine N-tele-methyltransferase that specifically monomethylates RPL3, thereby regulating translation elongation. Histidine methylation of RPL3 regulates translation elongation by slowing ribosome traversal on tyrosine codons: slower elongation provides enough time for proper folding of synthesized proteins and prevents cellular aggregation of tyrosine-rich proteins. The sequence is that of Histidine protein methyltransferase 1 homolog (METTL18) from Bos taurus (Bovine).